The following is a 622-amino-acid chain: FERM domain-containing protein 6 (622 aa).

In terms of domain architecture, FERM spans 16–328 (RRVCIFLPND…NSHRLYMNLQ (313 aa)). The disordered stretch occupies residues 357–452 (LDMDPLEKRS…KDRLEEDSQD (96 aa)). Low complexity-rich tracts occupy residues 384–395 (HSTASHSSSHTS) and 425–438 (SSMT…TSGV). Position 522 is a phosphoserine (S522). Position 523 is a phosphothreonine (T523). Phosphoserine is present on residues S525, S542, and S544.

It localises to the cytoplasm. The protein localises to the cell membrane. The sequence is that of FERM domain-containing protein 6 (Frmd6) from Mus musculus (Mouse).